A 1014-amino-acid chain; its full sequence is SUMO-specific isopeptidase USPL1 (1014 aa).

2 disordered regions span residues Thr-137–Pro-158 and Glu-275–Glu-318. Residues Glu-275–Leu-289 show a composition bias toward basic and acidic residues. The USP domain occupies Leu-355–Asp-636. Catalysis depends on Cys-364, which acts as the Nucleophile. The interval Cys-364–Leu-631 is SUMO-binding. His-592 functions as the Proton acceptor in the catalytic mechanism. Disordered stretches follow at residues His-794–His-823 and Asn-844–Glu-867. Pro residues predominate over residues Ile-802 to Lys-815.

The protein belongs to the peptidase C19 family.

It localises to the nucleus. Its subcellular location is the cajal body. SUMO-specific isopeptidase involved in protein desumoylation. Specifically binds SUMO proteins with a higher affinity for sumo2 and sumo3 which it cleaves more efficiently. Also able to process full-length SUMO proteins to their mature forms. Plays a key role in RNA polymerase-II-mediated snRNA transcription in the Cajal bodies. Is a component of complexes that can bind to U snRNA genes. In Danio rerio (Zebrafish), this protein is SUMO-specific isopeptidase USPL1 (uspl1).